A 208-amino-acid polypeptide reads, in one-letter code: Imidazole glycerol phosphate synthase subunit HisH (208 aa).

A Glutamine amidotransferase type-1 domain is found at 1–206 (MFAIVDYDTG…KEMVSANDFS (206 aa)). Cys-79 functions as the Nucleophile in the catalytic mechanism. Active-site residues include His-181 and Glu-183.

Heterodimer of HisH and HisF.

It is found in the cytoplasm. The enzyme catalyses 5-[(5-phospho-1-deoxy-D-ribulos-1-ylimino)methylamino]-1-(5-phospho-beta-D-ribosyl)imidazole-4-carboxamide + L-glutamine = D-erythro-1-(imidazol-4-yl)glycerol 3-phosphate + 5-amino-1-(5-phospho-beta-D-ribosyl)imidazole-4-carboxamide + L-glutamate + H(+). The catalysed reaction is L-glutamine + H2O = L-glutamate + NH4(+). Its pathway is amino-acid biosynthesis; L-histidine biosynthesis; L-histidine from 5-phospho-alpha-D-ribose 1-diphosphate: step 5/9. IGPS catalyzes the conversion of PRFAR and glutamine to IGP, AICAR and glutamate. The HisH subunit catalyzes the hydrolysis of glutamine to glutamate and ammonia as part of the synthesis of IGP and AICAR. The resulting ammonia molecule is channeled to the active site of HisF. The sequence is that of Imidazole glycerol phosphate synthase subunit HisH from Lactiplantibacillus plantarum (strain ATCC BAA-793 / NCIMB 8826 / WCFS1) (Lactobacillus plantarum).